A 477-amino-acid polypeptide reads, in one-letter code: Ribulose bisphosphate carboxylase large chain (477 aa).

Positions 1-2 (MS) are excised as a propeptide. Pro-3 is subject to N-acetylproline. Lys-14 carries the N6,N6,N6-trimethyllysine modification. Positions 123 and 173 each coordinate substrate. Lys-175 serves as the catalytic Proton acceptor. Substrate is bound at residue Lys-177. 3 residues coordinate Mg(2+): Lys-201, Asp-203, and Glu-204. Lys-201 is modified (N6-carboxylysine). His-294 (proton acceptor) is an active-site residue. Substrate is bound by residues Arg-295, His-327, and Ser-379.

This sequence belongs to the RuBisCO large chain family. Type I subfamily. As to quaternary structure, heterohexadecamer of 8 large chains and 8 small chains; disulfide-linked. The disulfide link is formed within the large subunit homodimers. The cofactor is Mg(2+). In terms of processing, the disulfide bond which can form in the large chain dimeric partners within the hexadecamer appears to be associated with oxidative stress and protein turnover.

Its subcellular location is the plastid. It localises to the chloroplast. The catalysed reaction is 2 (2R)-3-phosphoglycerate + 2 H(+) = D-ribulose 1,5-bisphosphate + CO2 + H2O. The enzyme catalyses D-ribulose 1,5-bisphosphate + O2 = 2-phosphoglycolate + (2R)-3-phosphoglycerate + 2 H(+). Its function is as follows. RuBisCO catalyzes two reactions: the carboxylation of D-ribulose 1,5-bisphosphate, the primary event in carbon dioxide fixation, as well as the oxidative fragmentation of the pentose substrate in the photorespiration process. Both reactions occur simultaneously and in competition at the same active site. The protein is Ribulose bisphosphate carboxylase large chain of Solanum bulbocastanum (Wild potato).